The sequence spans 302 residues: tRNA dimethylallyltransferase (302 aa).

Residue 9–16 coordinates ATP; it reads GATATGKS. 11-16 provides a ligand contact to substrate; the sequence is TATGKS. The interaction with substrate tRNA stretch occupies residues 34-37; that stretch reads DSRQ.

This sequence belongs to the IPP transferase family. As to quaternary structure, monomer. It depends on Mg(2+) as a cofactor.

The catalysed reaction is adenosine(37) in tRNA + dimethylallyl diphosphate = N(6)-dimethylallyladenosine(37) in tRNA + diphosphate. Catalyzes the transfer of a dimethylallyl group onto the adenine at position 37 in tRNAs that read codons beginning with uridine, leading to the formation of N6-(dimethylallyl)adenosine (i(6)A). The sequence is that of tRNA dimethylallyltransferase from Nostoc punctiforme (strain ATCC 29133 / PCC 73102).